Reading from the N-terminus, the 469-residue chain is MSAVITPAEFNDYKVADISLAAWGRRETIIAESEMPALMGLRRKYAAEQPLKGAKILGCIHMTIQTAVLIETLVALGAEVRWSSCNIFSTQDQAAAAIAAAGIAVYAWKGETEEEYEWCIEQTILKDGQPWDANMILDDGGDLTEIIHKKYPAMLDKIHGVTEETTTGVHRLLDMLAKGELKIPAINVNDSVTKSKNDNKYGCRHSLNDAIKRGTDHLLSGKQALVIGYGDVGKGSAQSLRQEGMIVKVTEVDPICAMQACMDGFELVSPFIDGENDGTEASIDKALLGKIDLIVTTTGNVNVCDSNMLKALKKRAVVCNIGHFDNEIDTAFMRKNWAWEEVKPQVHKIHRTGAGAFDAQNDDYLILLAEGRLVNLGNATGHPSRIMDGSFANQVLAQIFLFDQKYADLAPAKKAERLTVEVLPKKLDEEVALEMVRGFGGVVTKLTKTQADYIGVTVEGPFKPDAYRY.

Residues threonine 63, aspartate 139, and glutamate 164 each contribute to the substrate site. 165–167 (TTT) is a binding site for NAD(+). Substrate contacts are provided by lysine 194 and aspartate 198. Residues asparagine 199, 228–233 (GYGDVG), glutamate 251, asparagine 300, 321–323 (IGH), and asparagine 375 each bind NAD(+).

This sequence belongs to the adenosylhomocysteinase family. NAD(+) is required as a cofactor.

Its subcellular location is the cytoplasm. The catalysed reaction is S-adenosyl-L-homocysteine + H2O = L-homocysteine + adenosine. It functions in the pathway amino-acid biosynthesis; L-homocysteine biosynthesis; L-homocysteine from S-adenosyl-L-homocysteine: step 1/1. Its function is as follows. May play a key role in the regulation of the intracellular concentration of adenosylhomocysteine. The protein is Adenosylhomocysteinase of Pseudomonas syringae pv. tomato (strain ATCC BAA-871 / DC3000).